Consider the following 415-residue polypeptide: tRNA(Met) cytidine acetate ligase (415 aa).

Residues isoleucine 7–histidine 20, glycine 102, asparagine 165, and arginine 190–isoleucine 191 each bind ATP.

Belongs to the TmcAL family.

The protein localises to the cytoplasm. It carries out the reaction cytidine(34) in elongator tRNA(Met) + acetate + ATP = N(4)-acetylcytidine(34) in elongator tRNA(Met) + AMP + diphosphate. Its function is as follows. Catalyzes the formation of N(4)-acetylcytidine (ac(4)C) at the wobble position of elongator tRNA(Met), using acetate and ATP as substrates. First activates an acetate ion to form acetyladenylate (Ac-AMP) and then transfers the acetyl group to tRNA to form ac(4)C34. The sequence is that of tRNA(Met) cytidine acetate ligase from Acetivibrio thermocellus (strain ATCC 27405 / DSM 1237 / JCM 9322 / NBRC 103400 / NCIMB 10682 / NRRL B-4536 / VPI 7372) (Clostridium thermocellum).